The primary structure comprises 474 residues: tRNA-2-methylthio-N(6)-dimethylallyladenosine synthase (474 aa).

The MTTase N-terminal domain maps to 3–120; the sequence is KKLLIKTWGC…LPEMIKQSQS (118 aa). [4Fe-4S] cluster-binding residues include Cys-12, Cys-49, Cys-83, Cys-157, Cys-161, and Cys-164. Positions 143–375 constitute a Radical SAM core domain; it reads RAEGATAFVS…QQQINAQAMR (233 aa). Positions 378 to 441 constitute a TRAM domain; sequence RLMLGTEQRV…ANSLRGEIVR (64 aa).

This sequence belongs to the methylthiotransferase family. MiaB subfamily. Monomer. Requires [4Fe-4S] cluster as cofactor.

Its subcellular location is the cytoplasm. The enzyme catalyses N(6)-dimethylallyladenosine(37) in tRNA + (sulfur carrier)-SH + AH2 + 2 S-adenosyl-L-methionine = 2-methylsulfanyl-N(6)-dimethylallyladenosine(37) in tRNA + (sulfur carrier)-H + 5'-deoxyadenosine + L-methionine + A + S-adenosyl-L-homocysteine + 2 H(+). Catalyzes the methylthiolation of N6-(dimethylallyl)adenosine (i(6)A), leading to the formation of 2-methylthio-N6-(dimethylallyl)adenosine (ms(2)i(6)A) at position 37 in tRNAs that read codons beginning with uridine. The polypeptide is tRNA-2-methylthio-N(6)-dimethylallyladenosine synthase (Vibrio vulnificus (strain CMCP6)).